The sequence spans 466 residues: Cysteine--tRNA ligase (466 aa).

Zn(2+) is bound at residue C28. Positions 30–40 (PTVYNYIHIGN) match the 'HIGH' region motif. C208, H233, and E237 together coordinate Zn(2+). Residues 265–269 (KMSKS) carry the 'KMSKS' region motif. An ATP-binding site is contributed by K268. Position 269 is a phosphoserine (S269).

Belongs to the class-I aminoacyl-tRNA synthetase family. Monomer. Zn(2+) serves as cofactor.

It localises to the cytoplasm. The catalysed reaction is tRNA(Cys) + L-cysteine + ATP = L-cysteinyl-tRNA(Cys) + AMP + diphosphate. This is Cysteine--tRNA ligase from Shouchella clausii (strain KSM-K16) (Alkalihalobacillus clausii).